We begin with the raw amino-acid sequence, 720 residues long: Heat shock protein homolog pss1 (720 aa).

The residue at position 38 (serine 38) is a Phosphoserine. A Phosphothreonine modification is found at threonine 39. Residues 658-690 (KRQKVQAEREAAKAATKSEAEKQKPSGKFEEGT) are compositionally biased toward basic and acidic residues. The interval 658 to 720 (KRQKVQAERE…ETMEIDEQKE (63 aa)) is disordered. A compositionally biased stretch (acidic residues) spans 703-720 (VAPENEEVETMEIDEQKE).

The protein belongs to the heat shock protein 70 family.

It localises to the cytoplasm. Its function is as follows. Required for normal growth at various temperatures. The chain is Heat shock protein homolog pss1 (pss1) from Schizosaccharomyces pombe (strain 972 / ATCC 24843) (Fission yeast).